The primary structure comprises 207 residues: Guanylate kinase (207 aa).

One can recognise a Guanylate kinase-like domain in the interval 4–184 (GTLYIVSAPS…ALSDLKTIIR (181 aa)). Residue 11 to 18 (APSGAGKS) participates in ATP binding.

This sequence belongs to the guanylate kinase family.

It is found in the cytoplasm. It carries out the reaction GMP + ATP = GDP + ADP. Essential for recycling GMP and indirectly, cGMP. The polypeptide is Guanylate kinase (Salmonella paratyphi A (strain ATCC 9150 / SARB42)).